The primary structure comprises 309 residues: Oxidoreductase NAD-binding domain-containing protein 1 (309 aa).

Positions 1–14 are cleaved as a signal peptide; sequence MVVVIPRLLRGSLG. An FAD-binding FR-type domain is found at 47 to 161; that stretch reads HLERTADVVR…VGGEFFFDPK (115 aa). 175 to 180 provides a ligand contact to NAD(+); it reads GVGINP.

This Bos taurus (Bovine) protein is Oxidoreductase NAD-binding domain-containing protein 1 (OXNAD1).